Consider the following 185-residue polypeptide: HTH-type transcriptional regulator Hpr (185 aa).

The 145-residue stretch at 13-157 (AMIFSQRIAQ…LIAILRNIYG (145 aa)) folds into the HTH marR-type domain. Residues 63-86 (ISEIAKFGVMHVSTAFNFSKKLEE) constitute a DNA-binding region (H-T-H motif).

Homodimer.

Negative regulator of protease production and sporulation. This is HTH-type transcriptional regulator Hpr from Bacillus anthracis (strain CDC 684 / NRRL 3495).